An 89-amino-acid polypeptide reads, in one-letter code: Small ribosomal subunit protein uS15 (89 aa).

Positions 1 to 16 (MSVADIKKQDIVKDNG) are enriched in basic and acidic residues. The segment at 1–24 (MSVADIKKQDIVKDNGRSANDTGS) is disordered.

It belongs to the universal ribosomal protein uS15 family. In terms of assembly, part of the 30S ribosomal subunit. Forms a bridge to the 50S subunit in the 70S ribosome, contacting the 23S rRNA.

Functionally, one of the primary rRNA binding proteins, it binds directly to 16S rRNA where it helps nucleate assembly of the platform of the 30S subunit by binding and bridging several RNA helices of the 16S rRNA. Forms an intersubunit bridge (bridge B4) with the 23S rRNA of the 50S subunit in the ribosome. This is Small ribosomal subunit protein uS15 from Ralstonia pickettii (strain 12J).